Consider the following 311-residue polypeptide: Homeobox-leucine zipper protein ATHB-6 (311 aa).

Polar residues predominate over residues 1–10 (MMKRLSSSDS). The tract at residues 1–32 (MMKRLSSSDSVGGLISLCPTTSTDEQSPRRYG) is disordered. Residues 1–43 (MMKRLSSSDSVGGLISLCPTTSTDEQSPRRYGGREFQSMLEGY) are interaction with ABI1. Residues 59 to 118 (LSEKKRRLSINQVKALEKNFELENKLEPERKVKLAQELGLQPRQVAVWFQNRRARWKTKQ) constitute a DNA-binding region (homeobox). Positions 119–154 (LEKDYGVLKTQYDSLRHNFDSLRRDNESLLQEISKL) are leucine-zipper. The disordered stretch occupies residues 157–183 (KLNGGGGEEEEEENNAAVTTESDISVK). Residues 218–311 (LRDLLPLKAA…HWYSTVDHWN (94 aa)) form an interaction with ABI1 region.

This sequence belongs to the HD-ZIP homeobox family. Class I subfamily. Interacts with ABI1. In terms of processing, phosphorylated by PKA. Reversible inactivation of the binding to DNA by phosphorylation. In terms of tissue distribution, widely expressed.

The protein resides in the nucleus. Functionally, transcription activator that may act as growth regulators in response to water deficit. Interacts with the core sequence 5'-CAATTATTA-3' of promoters in response to ABA and in an ABI1-dependent manner. Involved in the negative regulation of the ABA signaling pathway. The sequence is that of Homeobox-leucine zipper protein ATHB-6 (ATHB-6) from Arabidopsis thaliana (Mouse-ear cress).